Consider the following 70-residue polypeptide: Large ribosomal subunit protein eL38 (70 aa).

A Glycyl lysine isopeptide (Lys-Gly) (interchain with G-Cter in SUMO2) cross-link involves residue K4. N6-acetyllysine; alternate is present on K9. Residue K9 forms a Glycyl lysine isopeptide (Lys-Gly) (interchain with G-Cter in SUMO2); alternate linkage. N6-acetyllysine is present on K67.

This sequence belongs to the eukaryotic ribosomal protein eL38 family. Component of the large ribosomal subunit.

It localises to the cytoplasm. Component of the large ribosomal subunit. The ribosome is a large ribonucleoprotein complex responsible for the synthesis of proteins in the cell. This chain is Large ribosomal subunit protein eL38 (RPL38), found in Homo sapiens (Human).